The sequence spans 419 residues: Gamma-glutamyl phosphate reductase (419 aa).

The protein belongs to the gamma-glutamyl phosphate reductase family.

The protein resides in the cytoplasm. It carries out the reaction L-glutamate 5-semialdehyde + phosphate + NADP(+) = L-glutamyl 5-phosphate + NADPH + H(+). Its pathway is amino-acid biosynthesis; L-proline biosynthesis; L-glutamate 5-semialdehyde from L-glutamate: step 2/2. Functionally, catalyzes the NADPH-dependent reduction of L-glutamate 5-phosphate into L-glutamate 5-semialdehyde and phosphate. The product spontaneously undergoes cyclization to form 1-pyrroline-5-carboxylate. The sequence is that of Gamma-glutamyl phosphate reductase from Maridesulfovibrio salexigens (strain ATCC 14822 / DSM 2638 / NCIMB 8403 / VKM B-1763) (Desulfovibrio salexigens).